The chain runs to 232 residues: Large ribosomal subunit protein uL1 (232 aa).

Belongs to the universal ribosomal protein uL1 family. Part of the 50S ribosomal subunit.

Its function is as follows. Binds directly to 23S rRNA. The L1 stalk is quite mobile in the ribosome, and is involved in E site tRNA release. Functionally, protein L1 is also a translational repressor protein, it controls the translation of the L11 operon by binding to its mRNA. This Burkholderia mallei (strain NCTC 10247) protein is Large ribosomal subunit protein uL1.